The sequence spans 424 residues: C4-dicarboxylate transport protein (424 aa).

A run of 8 helical transmembrane segments spans residues 4-24 (SLFK…VLLG), 44-64 (LIKM…IAGM), 76-96 (VALI…LVVV), 142-162 (IGAF…LFGF), 184-206 (VFFG…AMAF), 222-242 (LIVC…GLIA), 326-346 (IWHQ…AAGV), and 352-372 (IVLA…LALI).

The protein belongs to the dicarboxylate/amino acid:cation symporter (DAACS) (TC 2.A.23) family.

Its subcellular location is the cell inner membrane. Responsible for the transport of dicarboxylates such as succinate, fumarate, and malate from the periplasm across the membrane. The sequence is that of C4-dicarboxylate transport protein from Erwinia tasmaniensis (strain DSM 17950 / CFBP 7177 / CIP 109463 / NCPPB 4357 / Et1/99).